A 132-amino-acid polypeptide reads, in one-letter code: Holo-[acyl-carrier-protein] synthase (132 aa).

Residues Asp8 and Glu64 each coordinate Mg(2+).

This sequence belongs to the P-Pant transferase superfamily. AcpS family. Mg(2+) serves as cofactor.

Its subcellular location is the cytoplasm. It carries out the reaction apo-[ACP] + CoA = holo-[ACP] + adenosine 3',5'-bisphosphate + H(+). In terms of biological role, transfers the 4'-phosphopantetheine moiety from coenzyme A to a Ser of acyl-carrier-protein. This is Holo-[acyl-carrier-protein] synthase from Shewanella sediminis (strain HAW-EB3).